Consider the following 618-residue polypeptide: Carotenoid cleavage dioxygenase 7, chloroplastic (618 aa).

The transit peptide at Met-1–Arg-31 directs the protein to the chloroplast. The disordered stretch occupies residues Pro-11–Ile-34. Residues His-266, His-319, His-398, and His-612 each contribute to the Fe cation site.

The protein belongs to the carotenoid oxygenase family. It depends on Fe(2+) as a cofactor. As to expression, expressed in flowers, siliques, inflorescence stems, petiole, leaves and roots.

It is found in the plastid. The protein resides in the chloroplast. It catalyses the reaction 9-cis-beta-carotene + O2 = 9-cis-10'-apo-beta-carotenal + beta-ionone. Its function is as follows. Involved in strigolactones biosynthesis by cleaving asymmetrically a variety of linear and cyclic carotenoids at the 9-10 double bond. Produces one C(13) beta-ionone and the C(27) 10'-apo-beta-carotenal. Strigolactones are hormones that inhibit tillering and shoot branching through the MAX-dependent pathway, contribute to the regulation of shoot architectural response to phosphate-limiting conditions and function as rhizosphere signal that stimulates hyphal branching of arbuscular mycorrhizal fungi and trigger seed germination of root parasitic weeds. No activity on lycopene, lutein, zeaxanthin, violaxanthin or neoxanthin. Probably not involved in abscisic acid biosynthesis. The chain is Carotenoid cleavage dioxygenase 7, chloroplastic (CCD7) from Arabidopsis thaliana (Mouse-ear cress).